Here is a 259-residue protein sequence, read N- to C-terminus: AM-toxin biosynthesis protein 11 (259 aa).

The disordered stretch occupies residues Arg39–Thr66. Residues Ile50–Cys64 show a composition bias toward polar residues.

It participates in mycotoxin biosynthesis. Part of the gene clusters that mediate the biosynthesis of AM-toxins, host-selective toxins (HSTs) causing Alternaria blotch on apple, a worldwide distributed disease. AM-toxins are cyclic depsipeptides containing the 3 residues 2-hydroxy-isovaleric acid (2-HIV), dehydroalanine, L-alanine which are common for all 3 AM-toxins I to III. The fourth precursor is L-alpha-amino-methoxyphenyl-valeric acid (L-Amv) for AM-toxin I, L-alpha-amino-phenyl-valeric acid (L-Apv) for AM-toxin II, and L-alpha-amino-hydroxyphenyl-valeric acid (L-Ahv) for AM-toxin III. AM-toxins have two target sites for affecting susceptible apple cells; they cause invagination of the plasma membrane and electrolyte loss and chloroplast disorganization. The non-ribosomal peptide synthetase AMT1 contains 4 catalytic modules and is responsible for activation of each residue in AM-toxin. The aldo-keto reductase AMT2 catalyzes the conversion of 2-keto-isovaleric acid (2-KIV) to 2-hydroxy-isovaleric acid (2-HIV), one of the precursor residues incorporated by AMT1 during AM-toxin biosynthesis, by reduction of its ketone to an alcohol. The cytochrome P450 monooxygenase AMT3 and the thioesterase AMT4 are also important for AM-toxin production, but their exact function within the AM-toxin biosynthesis are not known yet. Up to 21 proteins (including AMT1 to AMT4) are predicted to be involved in AM-toxin biosynthesis since their expression ishighly up-regulated in AM-toxin-producing cultures. The polypeptide is AM-toxin biosynthesis protein 11 (Alternaria alternata (Alternaria rot fungus)).